Here is a 459-residue protein sequence, read N- to C-terminus: FBD-associated F-box protein At5g27750 (459 aa).

One can recognise an F-box domain in the interval 4–50 (FDRISELPESLITQILLCLPTKDSVKTSVLSTRWKNLWLNVPGLDLT). One can recognise an FBD domain in the interval 374–426 (TEELNLINVPRCIVSTLECVEIKGLFEWEEEEMKIARYFLENAAVLKKLTMSF).

The protein is FBD-associated F-box protein At5g27750 of Arabidopsis thaliana (Mouse-ear cress).